A 548-amino-acid chain; its full sequence is Chaperonin GroEL (548 aa).

Residues 29 to 32, K50, 86 to 90, G414, 478 to 480, and D494 each bind ATP; these read TLGP, DGTTT, and NAA.

The protein belongs to the chaperonin (HSP60) family. Forms a cylinder of 14 subunits composed of two heptameric rings stacked back-to-back. Interacts with the co-chaperonin GroES.

It is found in the cytoplasm. The catalysed reaction is ATP + H2O + a folded polypeptide = ADP + phosphate + an unfolded polypeptide.. Together with its co-chaperonin GroES, plays an essential role in assisting protein folding. The GroEL-GroES system forms a nano-cage that allows encapsulation of the non-native substrate proteins and provides a physical environment optimized to promote and accelerate protein folding. This chain is Chaperonin GroEL, found in Alcanivorax borkumensis (strain ATCC 700651 / DSM 11573 / NCIMB 13689 / SK2).